An 82-amino-acid polypeptide reads, in one-letter code: RNA-binding protein Hfq (82 aa).

In terms of domain architecture, Sm spans 11 to 71 (DTFLNHVRKT…ISTIMPGAPI (61 aa)).

This sequence belongs to the Hfq family. Homohexamer.

In terms of biological role, RNA chaperone that binds small regulatory RNA (sRNAs) and mRNAs to facilitate mRNA translational regulation in response to envelope stress, environmental stress and changes in metabolite concentrations. Also binds with high specificity to tRNAs. This chain is RNA-binding protein Hfq, found in Rhodopseudomonas palustris (strain TIE-1).